The primary structure comprises 399 residues: Phosphoglycerate kinase (399 aa).

Substrate is bound by residues 22-24 (DFN), Arg38, 61-64 (HLGR), Arg120, and Arg153. ATP is bound by residues Lys204, Glu326, and 353 to 356 (GGDT).

The protein belongs to the phosphoglycerate kinase family. In terms of assembly, monomer.

The protein localises to the cytoplasm. The catalysed reaction is (2R)-3-phosphoglycerate + ATP = (2R)-3-phospho-glyceroyl phosphate + ADP. It functions in the pathway carbohydrate degradation; glycolysis; pyruvate from D-glyceraldehyde 3-phosphate: step 2/5. The polypeptide is Phosphoglycerate kinase (Geotalea daltonii (strain DSM 22248 / JCM 15807 / FRC-32) (Geobacter daltonii)).